Consider the following 372-residue polypeptide: Putative glutamate--cysteine ligase 2 (372 aa).

It belongs to the glutamate--cysteine ligase type 2 family. YbdK subfamily. Homodimer.

The catalysed reaction is L-cysteine + L-glutamate + ATP = gamma-L-glutamyl-L-cysteine + ADP + phosphate + H(+). Functionally, ATP-dependent carboxylate-amine ligase which exhibits weak glutamate--cysteine ligase activity. The chain is Putative glutamate--cysteine ligase 2 (ybdK) from Escherichia coli O17:K52:H18 (strain UMN026 / ExPEC).